A 138-amino-acid chain; its full sequence is ATP synthase epsilon chain (138 aa).

Belongs to the ATPase epsilon chain family. In terms of assembly, F-type ATPases have 2 components, CF(1) - the catalytic core - and CF(0) - the membrane proton channel. CF(1) has five subunits: alpha(3), beta(3), gamma(1), delta(1), epsilon(1). CF(0) has three main subunits: a, b and c.

It localises to the cell inner membrane. In terms of biological role, produces ATP from ADP in the presence of a proton gradient across the membrane. The protein is ATP synthase epsilon chain of Psychrobacter sp. (strain PRwf-1).